Here is a 140-residue protein sequence, read N- to C-terminus: Lysozyme B (140 aa).

An N-terminal signal peptide occupies residues 1-18 (MKAFIVLVALALAAPALG). Residues 19–140 (RTMDRCSLAR…GWLPSIDDCF (122 aa)) form the C-type lysozyme domain. 4 disulfide bridges follow: cysteine 24–cysteine 139, cysteine 45–cysteine 129, cysteine 80–cysteine 96, and cysteine 92–cysteine 110. Residues glutamate 50 and aspartate 68 contribute to the active site.

The protein belongs to the glycosyl hydrolase 22 family. Found in the midgut.

The catalysed reaction is Hydrolysis of (1-&gt;4)-beta-linkages between N-acetylmuramic acid and N-acetyl-D-glucosamine residues in a peptidoglycan and between N-acetyl-D-glucosamine residues in chitodextrins.. Its function is as follows. Unlikely to play an active role in the humoral immune defense. May have a function in the digestion of bacteria in the food. The chain is Lysozyme B (LysB) from Drosophila melanogaster (Fruit fly).